A 256-amino-acid chain; its full sequence is Calsenilin (256 aa).

The disordered stretch occupies residues 1–22 (MQRTKEAVKASDGNLLGDPGRI). Lysine 26 is covalently cross-linked (Glycyl lysine isopeptide (Lys-Gly) (interchain with G-Cter in SUMO1)). 2 S-palmitoyl cysteine lipidation sites follow: cysteine 45 and cysteine 46. Phosphoserine is present on residues serine 60 and serine 63. Residues 67–123 (LELSTVRHQPEGLDQLQAQTKFTKKELQSLYRGFKNECPTGLVDEDTFKLIYSQFFP) form the EF-hand 1; degenerate domain. Lysine 90 is covalently cross-linked (Glycyl lysine isopeptide (Lys-Gly) (interchain with G-Cter in SUMO1)). 3 consecutive EF-hand domains span residues 126-161 (DATT…LLRG), 162-197 (TVHE…IYDM), and 210-245 (APLE…DENI). Ca(2+)-binding residues include aspartate 175, asparagine 177, aspartate 179, cysteine 181, glutamate 186, aspartate 223, asparagine 225, aspartate 227, and glutamate 234. An interaction with KCND2 region spans residues 243–256 (ENIMNSMQLFENVI).

This sequence belongs to the recoverin family. In terms of assembly, binds to DNA as a homomultimer. Dimerization is induced by binding to calcium. Interacts with the C-terminus of PSEN1 and PSEN2 and with PSEN2 CTF subunit. Associates with KCN1. Component of heteromultimeric potassium channels. Identified in potassium channel complexes containing KCND1, KCND2, KCND3, KCNIP1, KCNIP2, KCNIP3, KCNIP4, DPP6 and DPP10. Interacts with KCND2 and KCND3. In terms of processing, palmitoylated. Palmitoylation enhances association with the plasma membrane. Post-translationally, proteolytically cleaved by caspase-3. As to expression, highly expressed in brain. Isoform 1 or isoform 4 (T+ forms) are expressed at equal levels with isoform 2 or isoform 3 (T- forms). Primarily detected in the layer V and deep layer VI of the cerebral cortex, the hippocampus, and the entire cerebellum. Expressed at low levels in testis. Also expressed in heart.

The protein localises to the cytoplasm. Its subcellular location is the cell membrane. It localises to the endoplasmic reticulum. The protein resides in the golgi apparatus. It is found in the nucleus. Calcium-dependent transcriptional repressor that binds to the DRE element of genes including PDYN and FOS. Affinity for DNA is reduced upon binding to calcium and enhanced by binding to magnesium. Seems to be involved in nociception. Its function is as follows. Regulatory subunit of Kv4/D (Shal)-type voltage-gated rapidly inactivating A-type potassium channels, such as KCND2/Kv4.2 and KCND3/Kv4.3. Modulates channel expression at the cell membrane, gating characteristics, inactivation kinetics and rate of recovery from inactivation in a calcium-dependent and isoform-specific manner. Functionally, may play a role in the regulation of PSEN2 proteolytic processing and apoptosis. Together with PSEN2 involved in modulation of amyloid-beta formation. This chain is Calsenilin (Kcnip3), found in Mus musculus (Mouse).